Consider the following 165-residue polypeptide: Cysteine-rich hydrophobic domain-containing protein 2 (165 aa).

Residues 1 to 26 (MADFDEIYEEEEDEERALEEQLLKYS) adopt a coiled-coil conformation. The CHIC motif (Cys-rich) signature appears at 88 to 106 (CGCLCCCCTLGCSMWPVIC).

The protein belongs to the CHIC family. In terms of processing, palmitoylation in the CHIC motif is required for membrane association.

It localises to the membrane. The protein resides in the golgi apparatus. The chain is Cysteine-rich hydrophobic domain-containing protein 2 (Chic2) from Mus musculus (Mouse).